The chain runs to 64 residues: MLNLEVIIETGEQVIQKISFNLQHISSVLNTEVFDPFDYCYYRGGNFWEIESAEDCSGDDEFIE.

The protein is Non-structural protein 3b of Avian infectious bronchitis virus (strain Beaudette) (IBV).